The primary structure comprises 355 residues: Molybdenum import ATP-binding protein ModC (355 aa).

Residues 1–233 (MTLIVEAKQR…PSAAADRKEA (233 aa)) form the ABC transporter domain. 31–38 (GRSGSGKT) contributes to the ATP binding site. In terms of domain architecture, Mop spans 291-355 (GLSALNILEG…AIIKTVALEG (65 aa)).

The protein belongs to the ABC transporter superfamily. Molybdate importer (TC 3.A.1.8) family. The complex is composed of two ATP-binding proteins (ModC), two transmembrane proteins (ModB) and a solute-binding protein (ModA).

It localises to the cell inner membrane. It carries out the reaction molybdate(out) + ATP + H2O = molybdate(in) + ADP + phosphate + H(+). In terms of biological role, part of the ABC transporter complex ModABC involved in molybdenum import. Responsible for energy coupling to the transport system. The protein is Molybdenum import ATP-binding protein ModC of Rhizobium etli (strain ATCC 51251 / DSM 11541 / JCM 21823 / NBRC 15573 / CFN 42).